The sequence spans 379 residues: Flap endonuclease 1 (379 aa).

The tract at residues 1–105 (MGIKGLTKLL…QELAKRYSKR (105 aa)) is N-domain. Residue D34 coordinates Mg(2+). A DNA-binding site is contributed by R71. Mg(2+) contacts are provided by D87, E159, E161, D180, and D182. Residues 123 to 254 (AIEKLSKRTV…QTALKLIRQH (132 aa)) are I-domain. A DNA-binding site is contributed by E159. DNA is bound by residues G232 and D234. A Mg(2+)-binding site is contributed by D234. The tract at residues 331–379 (AKNKSSQGRLESFFKPTATTSAPLKRKETSDKTSKAAANKKTKAGGKKK) is disordered. The tract at residues 336–344 (SQGRLESFF) is interaction with PCNA. Residues 355-364 (KRKETSDKTS) are compositionally biased toward basic and acidic residues. Positions 368-379 (ANKKTKAGGKKK) are enriched in basic residues.

The protein belongs to the XPG/RAD2 endonuclease family. FEN1 subfamily. As to quaternary structure, interacts with PCNA. Three molecules of FEN1 bind to one PCNA trimer with each molecule binding to one PCNA monomer. PCNA stimulates the nuclease activity without altering cleavage specificity. Requires Mg(2+) as cofactor. Post-translationally, phosphorylated. Phosphorylation upon DNA damage induces relocalization to the nuclear plasma.

It is found in the nucleus. It localises to the nucleolus. Its subcellular location is the nucleoplasm. The protein resides in the mitochondrion. Structure-specific nuclease with 5'-flap endonuclease and 5'-3' exonuclease activities involved in DNA replication and repair. During DNA replication, cleaves the 5'-overhanging flap structure that is generated by displacement synthesis when DNA polymerase encounters the 5'-end of a downstream Okazaki fragment. It enters the flap from the 5'-end and then tracks to cleave the flap base, leaving a nick for ligation. Also involved in the long patch base excision repair (LP-BER) pathway, by cleaving within the apurinic/apyrimidinic (AP) site-terminated flap. Acts as a genome stabilization factor that prevents flaps from equilibrating into structures that lead to duplications and deletions. Also possesses 5'-3' exonuclease activity on nicked or gapped double-stranded DNA, and exhibits RNase H activity. Also involved in replication and repair of rDNA and in repairing mitochondrial DNA. The protein is Flap endonuclease 1 of Zea mays (Maize).